A 369-amino-acid chain; its full sequence is Glutamate 5-kinase (369 aa).

K11 contacts ATP. Substrate is bound by residues S51, D138, and N150. ATP contacts are provided by residues 170 to 171 (TD) and 212 to 218 (TGGMATK). In terms of domain architecture, PUA spans 277-355 (KGSIVIDEGA…QDIYAVLGYE (79 aa)).

The protein belongs to the glutamate 5-kinase family.

It is found in the cytoplasm. It catalyses the reaction L-glutamate + ATP = L-glutamyl 5-phosphate + ADP. Its pathway is amino-acid biosynthesis; L-proline biosynthesis; L-glutamate 5-semialdehyde from L-glutamate: step 1/2. Its function is as follows. Catalyzes the transfer of a phosphate group to glutamate to form L-glutamate 5-phosphate. The polypeptide is Glutamate 5-kinase (Aliivibrio fischeri (strain ATCC 700601 / ES114) (Vibrio fischeri)).